The following is a 1138-amino-acid chain: Nuclear pore complex-interacting protein family member B13 (1138 aa).

A helical transmembrane segment spans residues 73-93 (VVITLWIVYLWVSLLKTIFWS). Disordered stretches follow at residues 242 to 578 (RMGH…NIKT) and 747 to 1138 (ERLR…RRLS). A compositionally biased stretch (polar residues) spans 252–263 (QQHSITDNSLSL). Pro residues predominate over residues 349–359 (PLPPSAPPSAP). Composition is skewed to basic and acidic residues over residues 406 to 416 (DNIKTPAERLR), 448 to 458 (DNIKTPAERLR), 490 to 500 (DNIKTPAERLR), 532 to 542 (DNIKTPAERLR), 782 to 792 (DNIKTPAERLR), 824 to 834 (DNIKTPAERLR), 866 to 876 (DNIKTPAERLR), 908 to 918 (DNIKTPAERLR), 950 to 960 (DNIKTPAERLR), and 992 to 1002 (DNIKTPAERLR).

Belongs to the NPIP family.

The protein resides in the membrane. In Homo sapiens (Human), this protein is Nuclear pore complex-interacting protein family member B13.